A 199-amino-acid chain; its full sequence is Imidazoleglycerol-phosphate dehydratase (199 aa).

Belongs to the imidazoleglycerol-phosphate dehydratase family.

The protein localises to the cytoplasm. It catalyses the reaction D-erythro-1-(imidazol-4-yl)glycerol 3-phosphate = 3-(imidazol-4-yl)-2-oxopropyl phosphate + H2O. The protein operates within amino-acid biosynthesis; L-histidine biosynthesis; L-histidine from 5-phospho-alpha-D-ribose 1-diphosphate: step 6/9. In Roseiflexus sp. (strain RS-1), this protein is Imidazoleglycerol-phosphate dehydratase.